Consider the following 71-residue polypeptide: MAIQSKYSNAQVESIIAELLAVLEKHQSPTDLSLMALGNCVTHLLQKKVPAEAREVVAEQFAKALSRSVKS.

This sequence belongs to the UPF0352 family.

The chain is UPF0352 protein Spea_1764 from Shewanella pealeana (strain ATCC 700345 / ANG-SQ1).